The chain runs to 389 residues: Protein DDI1 homolog 1 (389 aa).

The interval 109–132 (SSSSAQSAQRTRRVEQDDEGEKSM) is disordered. Asp261 is a catalytic residue.

Belongs to the DDI1 family. Expressed in most tissues.

It localises to the cytoplasm. The protein resides in the nucleus. Aspartic protease. Required for the cleavage and activation of transcription factors such as isoform a of the transcription factor skn-1, which in turn regulates the expression of proteasomal subunits such as rpt-3. Plays a key role in the degradation of the potassium channel slo-1, perhaps acting directly, in cleaving slo-1 upstream of the ER-associated degradation pathway (ERAD), and also indirectly, via activation of the transcription factor skn-1, which mediates proteasomal homeostasis. This Caenorhabditis elegans protein is Protein DDI1 homolog 1.